Consider the following 296-residue polypeptide: 4-hydroxybenzoate octaprenyltransferase (296 aa).

8 consecutive transmembrane segments (helical) span residues 28 to 48 (PIGI…AGNG), 55 to 75 (VLIF…INDF), 102 to 122 (AVML…CTNA), 145 to 167 (TYYP…FTAA), 174 to 196 (SAWL…YAMV), 219 to 239 (VIIL…GNRF), 241 to 261 (LGGW…WEFW), and 275 to 295 (FLHN…DYAL).

It belongs to the UbiA prenyltransferase family. Mg(2+) serves as cofactor.

The protein resides in the cell inner membrane. It catalyses the reaction all-trans-octaprenyl diphosphate + 4-hydroxybenzoate = 4-hydroxy-3-(all-trans-octaprenyl)benzoate + diphosphate. The protein operates within cofactor biosynthesis; ubiquinone biosynthesis. Its function is as follows. Catalyzes the prenylation of para-hydroxybenzoate (PHB) with an all-trans polyprenyl group. Mediates the second step in the final reaction sequence of ubiquinone-8 (UQ-8) biosynthesis, which is the condensation of the polyisoprenoid side chain with PHB, generating the first membrane-bound Q intermediate 3-octaprenyl-4-hydroxybenzoate. The polypeptide is 4-hydroxybenzoate octaprenyltransferase (Pseudomonas entomophila (strain L48)).